A 166-amino-acid polypeptide reads, in one-letter code: Regulatory protein RecX (166 aa).

The protein belongs to the RecX family.

The protein localises to the cytoplasm. Functionally, modulates RecA activity. The polypeptide is Regulatory protein RecX (Escherichia coli (strain SMS-3-5 / SECEC)).